Here is a 1071-residue protein sequence, read N- to C-terminus: Exportin-1 (1071 aa).

Residues 46-112 form the Importin N-terminal domain; it reads AQEVLTHLKE…KKYVVGLIIK (67 aa). HEAT repeat units follow at residues 217–240, 241–277, 354–472, 515–553, 560–597, and 602–639; these read QNAPLVHATLETLLRFLNWIPLGY, IFETKLISTLIYKFLNVPMFRNVSLKCLTEIAGVSVS, MLLV…YVDT, RFLVTVIKDLLGLCEQKRGKDNKAIIASNIMYIVGQYPR, KFLKTVVNKLFEFMHETHDGVQDMACDTFIKIAQKCRR, and VQVGEVMPFIDEILNNINTIICDLQPQQVHTFYEAVGY. The segment at 327 to 450 is necessary for interaction with Ran and nuclear export complex formation; it reads CTFLKEHGQL…VREFMKDTDS (124 aa). Position 391 is a phosphoserine (Ser391). The necessary for interaction with RANBP3 stretch occupies residues 411-481; it reads TVLSKVRLLM…TEIIMTKKLQ (71 aa). Lys446 bears the N6-acetyllysine mark. Position 448 is a phosphothreonine (Thr448). The residue at position 450 (Ser450) is a Phosphoserine. Tyr454 bears the Phosphotyrosine mark. Position 693 is an N6-acetyllysine (Lys693). HEAT repeat units lie at residues 775–813, 885–916, 917–954, and 1002–1039; these read NFVPPLLDAVLIDYQRNVPAAREPEVLSTMAIIVNKLGG, TMRNVADTGLQILFTLLQNVAQEEAAAQSFYQ, TYFCDILQHIFSVVTDTSHTAGLTMHASILAYMFNLVE, and FSLNQDIPAFKEHLRDFLVQIKEFAGEDTSDLFLEERE. Residue Ser1031 is modified to Phosphoserine.

The protein belongs to the exportin family. Found in a U snRNA export complex with PHAX/RNUXA, NCBP1/CBP80, NCBP2/CBP20, RAN, XPO1 and m7G-capped RNA. Component of a nuclear export receptor complex composed of KPNB1, RAN, SNUPN and XPO1. Found in a trimeric export complex with SNUPN, RAN and XPO1. Found in a nuclear export complex with RANBP3 and RAN. Found in a 60S ribosomal subunit export complex with NMD3, RAN, XPO1. Interacts with DDX3X, NMD3, NUP42, NUP88, NUP214, RANBP3 and TERT. Interacts with NEMF (via its N-terminus). Interacts with the monomeric form of BIRC5/survivin deacetylated at 'Lys-129'. Interacts with SERTAD2; the interaction translocates SERTAD2 out of the nucleus. Interacts with ATF2. Interacts with SLC35G1 and STIM1. Interacts with DCAF8. Interacts with DTNBP1 and the interaction translocates DTNBP1 out of the nucleus. Interacts with CPEB3. Interacts with HAX1. Interacts with BOK; translocates to the cytoplasm. Interacts with HSP90AB1. Interacts with LRPPRC; interacts with LRPPRC alone and also when LRPPRC is in complex with EIF4E and with EIF4E sensitivity element (4ESE)-containing mRNAs to form an EIF4E-dependent mRNA export complex.

It is found in the cytoplasm. The protein localises to the nucleus. The protein resides in the nucleoplasm. Its subcellular location is the cajal body. It localises to the nucleolus. Mediates the nuclear export of cellular proteins (cargos) bearing a leucine-rich nuclear export signal (NES) and of RNAs. In the nucleus, in association with RANBP3, binds cooperatively to the NES on its target protein and to the GTPase Ran in its active GTP-bound form. Docking of this complex to the nuclear pore complex (NPC) is mediated through binding to nucleoporins. Upon transit of a nuclear export complex into the cytoplasm, disassembling of the complex and hydrolysis of Ran-GTP to Ran-GDP (induced by RANBP1 and RANGAP1, respectively) cause release of the cargo from the export receptor. The directionality of nuclear export is thought to be conferred by an asymmetric distribution of the GTP- and GDP-bound forms of Ran between the cytoplasm and nucleus. Involved in U3 snoRNA transport from Cajal bodies to nucleoli. Binds to late precursor U3 snoRNA bearing a TMG cap. The chain is Exportin-1 (Xpo1) from Mus musculus (Mouse).